Consider the following 132-residue polypeptide: Pro-MCH 1 (132 aa).

An N-terminal signal peptide occupies residues 1–24 (MRHSVLSISFAVALFLECYTPSTA). The cysteines at positions 120 and 129 are disulfide-linked.

Belongs to the melanin-concentrating hormone family. As to expression, pituitary gland. Produced in neurons of lateral basal hypothalamus which project both to the brain and to the neural lobe of the pituitary gland from where MCH is released.

Functionally, plays a role in skin pigmentation by antagonizing the action of melanotropin alpha. Induces melanin concentration within the melanophores. May participate in the control of the hypothalamo-pituitary adrenal gland axis by inhibiting the release of ACTH. The polypeptide is Pro-MCH 1 (mch1) (Oncorhynchus mykiss (Rainbow trout)).